We begin with the raw amino-acid sequence, 276 residues long: Large ribosomal subunit protein uL2 (276 aa).

Positions 226 to 276 (MNSVDHPHGGGEGKTSGGRHPVSPWGTPTKGYKTRSNKRTDKLILRHRNKG) are disordered.

This sequence belongs to the universal ribosomal protein uL2 family. As to quaternary structure, part of the 50S ribosomal subunit. Forms a bridge to the 30S subunit in the 70S ribosome.

Its function is as follows. One of the primary rRNA binding proteins. Required for association of the 30S and 50S subunits to form the 70S ribosome, for tRNA binding and peptide bond formation. It has been suggested to have peptidyltransferase activity; this is somewhat controversial. Makes several contacts with the 16S rRNA in the 70S ribosome. The protein is Large ribosomal subunit protein uL2 of Vesicomyosocius okutanii subsp. Calyptogena okutanii (strain HA).